We begin with the raw amino-acid sequence, 256 residues long: Pyridoxine 5'-phosphate synthase (256 aa).

Asn12 contacts 3-amino-2-oxopropyl phosphate. 14–15 lines the 1-deoxy-D-xylulose 5-phosphate pocket; sequence DH. Residue Arg23 coordinates 3-amino-2-oxopropyl phosphate. Catalysis depends on His48, which acts as the Proton acceptor. 1-deoxy-D-xylulose 5-phosphate contacts are provided by Arg50 and His55. The active-site Proton acceptor is the Glu75. Thr105 contributes to the 1-deoxy-D-xylulose 5-phosphate binding site. His199 (proton donor) is an active-site residue. Residues Gly200 and 221 to 222 contribute to the 3-amino-2-oxopropyl phosphate site; that span reads GY.

The protein belongs to the PNP synthase family. In terms of assembly, homooctamer; tetramer of dimers.

Its subcellular location is the cytoplasm. The catalysed reaction is 3-amino-2-oxopropyl phosphate + 1-deoxy-D-xylulose 5-phosphate = pyridoxine 5'-phosphate + phosphate + 2 H2O + H(+). Its pathway is cofactor biosynthesis; pyridoxine 5'-phosphate biosynthesis; pyridoxine 5'-phosphate from D-erythrose 4-phosphate: step 5/5. Its function is as follows. Catalyzes the complicated ring closure reaction between the two acyclic compounds 1-deoxy-D-xylulose-5-phosphate (DXP) and 3-amino-2-oxopropyl phosphate (1-amino-acetone-3-phosphate or AAP) to form pyridoxine 5'-phosphate (PNP) and inorganic phosphate. In Bradyrhizobium sp. (strain ORS 278), this protein is Pyridoxine 5'-phosphate synthase.